A 362-amino-acid chain; its full sequence is G-protein coupled receptor 4 (362 aa).

The Extracellular portion of the chain corresponds to 1–8; the sequence is MGNRTLEG. An N-linked (GlcNAc...) asparagine glycan is attached at Asn-3. A helical membrane pass occupies residues 9-45; sequence CHVDSRMDHLFPPSLYIFVIGVGLPTNCLALWAAYRQ. 2 disulfides stabilise this stretch: Cys-9–Cys-258 and Cys-90–Cys-168. Topologically, residues 46-49 are cytoplasmic; sequence VRQR. The chain crosses the membrane as a helical span at residues 50 to 80; sequence NELGVYLMNLSIADLLYICTLPLWVDYFLHH. Residues 81 to 85 are Extracellular-facing; that stretch reads DNWIH. The chain crosses the membrane as a helical span at residues 86–121; the sequence is GPGSCKLFGFIFYTNIYISIAFLCCISVDRYLAVAH. Residues 122–129 lie on the Cytoplasmic side of the membrane; the sequence is PLRFARLR. The helical transmembrane segment at 130-156 threads the bilayer; it reads RVKTAVAVSSVVWATELGANSAPLFHD. Residues 157-172 are Extracellular-facing; that stretch reads ELFRDRYNHTFCFEKF. The extracellular loop 2 (ECL2) stretch occupies residues 157 to 172; that stretch reads ELFRDRYNHTFCFEKF. N-linked (GlcNAc...) asparagine glycosylation occurs at Asn-164. The helical transmembrane segment at 173–210 threads the bilayer; it reads PMEGWVAWMNLYRVFVGFLFPWALMLLSYRGILRAVRG. Over 211 to 214 the chain is Cytoplasmic; the sequence is SVST. Residues 215–250 traverse the membrane as a helical segment; that stretch reads ERQEKVKIKRLALSLIAIVLVCFAPYHVLLLSRSAV. At 251–260 the chain is on the extracellular side; it reads YLRRPRDCGF. The helical transmembrane segment at 261–289 threads the bilayer; it reads EERVFSAYHSSLAFTSLNCVADPILYCLV. The Cytoplasmic portion of the chain corresponds to 290 to 362; the sequence is NEGARSDVAK…VQLKMLPPAQ (73 aa).

It belongs to the G-protein coupled receptor 1 family.

The protein localises to the cell membrane. Its activity is regulated as follows. Activated by a network of residues that connects an extracellular-facing cavity to Glu-145, a conserved charged residue buried in the transmembrane core of the receptor. Protonation likely drives conformational changes in extracellular loop 2 (ECL2), which stabilizes movement of transmembrane 3 (TM3) and a series of rearrangements that connect the extracellular-facing cavity to Glu-145, a residue only conserved in proton-sensing G-protein coupled receptors. In terms of biological role, proton-sensing G-protein coupled receptor activated by extracellular pH, which is required to monitor pH changes and generate adaptive reactions. Activated by an optimal pH of 6.8-7.2. Ligand binding causes a conformation change that triggers signaling via guanine nucleotide-binding proteins (G proteins) and modulates the activity of downstream effectors, such as adenylate cyclase. GPR4 is mainly coupled to G(s) G proteins and mediates activation of adenylate cyclase activity. May also couple with G(q) and G(12)/G(13) G proteins. Acts as a key regulator of respiratory sensitivity to CO2/H(+) in brain retrotrapezoid nucleus neurons: acts by mediating detection of protons generated by the formation of carbonic acid in the blood, an important mechanism to impulse to breathe. Also acts as a regulator of acid secretion in the kidney collecting duct by maintaining acid-base homeostasis in the kidney. Acidosis-induced GPR4 activation increases paracellular gap formation and permeability of vascular endothelial cells, possibly through the G(12)/G(13)/Rho GTPase signaling pathway. The sequence is that of G-protein coupled receptor 4 (GPR4) from Bos taurus (Bovine).